The chain runs to 160 residues: Prostaglandin E synthase 3 (160 aa).

The region spanning 1 to 90 (MQPASAKWYD…ESGQSWPRLT (90 aa)) is the CS domain. At K33 the chain carries N6-acetyllysine. K35 is covalently cross-linked (Glycyl lysine isopeptide (Lys-Gly) (interchain with G-Cter in SUMO2)). S44 is subject to Phosphoserine. A Glycyl lysine isopeptide (Lys-Gly) (interchain with G-Cter in SUMO2) cross-link involves residue K65. S85, S100, S113, and S118 each carry phosphoserine. The interval 118–160 (SNFDRFSEMMDHMGGDEDVDLPEVDGADDDSQDSDDEKMPDLE) is disordered. Residues 122-132 (RFSEMMDHMGG) show a composition bias toward basic and acidic residues. Positions 133 to 153 (DEDVDLPEVDGADDDSQDSDD) are enriched in acidic residues. A phosphoserine mark is found at S148 and S151. The PXLE motif motif lies at 157 to 160 (PDLE).

This sequence belongs to the p23/wos2 family. As to quaternary structure, probably forms a complex composed of chaperones HSP90 and HSP70, co-chaperones STIP1/HOP, CDC37, PPP5C, PTGES3/p23, TSC1 and client protein TSC2. Binds to the progesterone receptor. Interacts with TERT; the interaction, together with HSP90AA1, is required for correct assembly and stabilization of the telomerase holoenzyme complex. Interacts (via PXLE motif) with EGLN1/PHD2, recruiting EGLN1/PHD2 to the HSP90 pathway to facilitate HIF alpha proteins hydroxylation. Interacts with HSP90AA1, FLCN, FNIP1 and FNIP2. In terms of processing, proteolytically cleaved by caspase-7 (CASP7) in response to apoptosis, leading to its inactivation. Expressed in testis, kidney, bladder and ovary.

The protein resides in the cytoplasm. The catalysed reaction is prostaglandin H2 = prostaglandin E2. The protein operates within lipid metabolism; prostaglandin biosynthesis. Cytosolic prostaglandin synthase that catalyzes the oxidoreduction of prostaglandin endoperoxide H2 (PGH2) to prostaglandin E2 (PGE2). Molecular chaperone that localizes to genomic response elements in a hormone-dependent manner and disrupts receptor-mediated transcriptional activation, by promoting disassembly of transcriptional regulatory complexes. Facilitates HIF alpha proteins hydroxylation via interaction with EGLN1/PHD2, leading to recruit EGLN1/PHD2 to the HSP90 pathway. In Mus musculus (Mouse), this protein is Prostaglandin E synthase 3 (Ptges3).